A 439-amino-acid polypeptide reads, in one-letter code: Kelch domain-containing protein 10 (439 aa).

The disordered stretch occupies residues 1-50 (MSAAQGWDRNRRRGGGAAGGASGVSGAGAAGGGRGTGQLNRFVQLSGRPH). R13 carries the omega-N-methylarginine modification. Gly residues predominate over residues 15–36 (GGAAGGASGVSGAGAAGGGRGT). Kelch repeat units follow at residues 87 to 154 (PARS…LASM), 155 to 198 (SLVL…SCRG), 199 to 260 (KRPS…RYRH), 261 to 319 (EIAH…HSCV), 320 to 364 (QIKN…VYFH), and 365 to 403 (CAAV…PSLL). Residues 398 to 439 (VVPSLLELAWEKLLAAFPNLANLSRTQLLHLGLTQELIERLK) form an interaction with CUL2 region.

It belongs to the KLHDC10 family. Component of a CRL2 E3 ubiquitin-protein ligase complex, also named ECS (Elongin BC-CUL2/5-SOCS-box protein) complex, composed of CUL2, Elongin BC (ELOB and ELOC), RBX1 and substrate-specific adapter KLHDC10. Interacts (via the 6 Kelch repeats) with PPP5C.

The protein localises to the nucleus. The protein resides in the cytoplasm. The protein operates within protein modification; protein ubiquitination. Substrate-recognition component of a Cul2-RING (CRL2) E3 ubiquitin-protein ligase complex of the DesCEND (destruction via C-end degrons) pathway, which recognizes a C-degron located at the extreme C-terminus of target proteins, leading to their ubiquitination and degradation. The C-degron recognized by the DesCEND pathway is usually a motif of less than ten residues and can be present in full-length proteins, truncated proteins or proteolytically cleaved forms. The CRL2(KLHDC10) complex specifically recognizes proteins with a proline-glycine (Pro-Gly) or an alanine tail (CAT tail) at the C-terminus, leading to their ubiquitination and degradation. The CRL2(KLHDC10) complex is involved in the ribosome-associated quality control (RQC) pathway, which mediates the extraction of incompletely synthesized nascent chains from stalled ribosomes: CRL2(KLHDC10) acts downstream of NEMF and recognizes CAT tails associated with stalled nascent chains, leading to their ubiquitination and degradation. Participates in the oxidative stress-induced cell death through MAP3K5 activation. Inhibits PPP5C phosphatase activity on MAP3K5. Acts as a regulator of necroptosis. In Mus musculus (Mouse), this protein is Kelch domain-containing protein 10.